The primary structure comprises 306 residues: Apolipoprotein E (306 aa).

The N-terminal stretch at 1-18 (MKVLWAVLVVTLLAGCQA) is a signal peptide. 8 consecutive repeat copies span residues 81-102 (VLME…QELG), 103-124 (PMAE…ARLG), 125-146 (ADME…TMLG), 147-168 (QSAE…KRLL), 169-190 (RDAE…EGAE), 191-212 (RGVS…LRAA), 213-230 (QTSQ…ERLR), and 231-252 (GRLE…EQME). The tract at residues 81 to 252 (VLMEDTMKEV…RLDVVREQME (172 aa)) is 8 X 22 AA approximate tandem repeats. M144 carries the post-translational modification Methionine sulfoxide. S148 carries the phosphoserine modification. Residues 159 to 169 (HLRKLRKRLLR) form an LDL and other lipoprotein receptors binding region. Residue 163 to 166 (LRKR) coordinates heparin. The interval 211 to 280 (AAQTSQPLRE…GWFEPVVEDM (70 aa)) is lipid-binding and lipoprotein association. Position 226 to 233 (226 to 233 (GERLRGRL)) interacts with heparin. Residues 268-280 (RLKGWFEPVVEDM) are specificity for association with VLDL.

This sequence belongs to the apolipoprotein A1/A4/E family. Homotetramer. May interact with ABCA1; functionally associated with ABCA1 in the biogenesis of HDLs. May interact with APP/A4 amyloid-beta peptide; the interaction is extremely stable in vitro but its physiological significance is unclear. May interact with MAPT. May interact with MAP2. In the cerebrospinal fluid, interacts with secreted SORL1. Interacts with PMEL; this allows the loading of PMEL luminal fragment on ILVs to induce fibril nucleation. Post-translationally, APOE exists as multiple glycosylated and sialylated glycoforms within cells and in plasma. The extent of glycosylation and sialylation are tissue and context specific. In terms of processing, glycated in plasma VLDL. Phosphorylated by FAM20C in the extracellular medium.

Its subcellular location is the secreted. The protein resides in the extracellular space. It localises to the extracellular matrix. It is found in the extracellular vesicle. The protein localises to the endosome. Its subcellular location is the multivesicular body. APOE is an apolipoprotein, a protein associating with lipid particles, that mainly functions in lipoprotein-mediated lipid transport between organs via the plasma and interstitial fluids. APOE is a core component of plasma lipoproteins and is involved in their production, conversion and clearance. Apolipoproteins are amphipathic molecules that interact both with lipids of the lipoprotein particle core and the aqueous environment of the plasma. As such, APOE associates with chylomicrons, chylomicron remnants, very low density lipoproteins (VLDL) and intermediate density lipoproteins (IDL) but shows a preferential binding to high-density lipoproteins (HDL). It also binds a wide range of cellular receptors including the LDL receptor/LDLR, the LDL receptor-related proteins LRP1, LRP2 and LRP8 and the very low-density lipoprotein receptor/VLDLR that mediate the cellular uptake of the APOE-containing lipoprotein particles. Finally, APOE also has a heparin-binding activity and binds heparan-sulfate proteoglycans on the surface of cells, a property that supports the capture and the receptor-mediated uptake of APOE-containing lipoproteins by cells. A main function of APOE is to mediate lipoprotein clearance through the uptake of chylomicrons, VLDLs, and HDLs by hepatocytes. APOE is also involved in the biosynthesis by the liver of VLDLs as well as their uptake by peripheral tissues ensuring the delivery of triglycerides and energy storage in muscle, heart and adipose tissues. By participating in the lipoprotein-mediated distribution of lipids among tissues, APOE plays a critical role in plasma and tissues lipid homeostasis. APOE is also involved in two steps of reverse cholesterol transport, the HDLs-mediated transport of cholesterol from peripheral tissues to the liver, and thereby plays an important role in cholesterol homeostasis. First, it is functionally associated with ABCA1 in the biogenesis of HDLs in tissues. Second, it is enriched in circulating HDLs and mediates their uptake by hepatocytes. APOE also plays an important role in lipid transport in the central nervous system, regulating neuron survival and sprouting. The chain is Apolipoprotein E (APOE) from Hystrix brachyura (Malayan porcupine).